A 740-amino-acid chain; its full sequence is MGPGLTLSGMTEQSSLFPAPAPKGSALVAAKIKALREQLNRWAHEYYVQDTPSVPDAEYDRAFQELQALEGAYPDLVTPDSPTQRVLGAVLDGLTPVRHRVPMLSIRTETDTEASGAQAFDARVRRELKLPPDAPPVEYVAEPKFDGLAMSLRYEGGRLVQAATRGDGEVGEDVTHNVRTIRQIPLSLPAGVPRVLEVRGEVYMRRADFDALNERQREKGDKTFVNPRNAAAGAVRQLDSGITAQRPLSFFAYGLGEVTPAAEGGPDFGTHFGMLQQLKEWGFPVAAQVQIAQGASELIAFHQRVGAERDALPYDIDGVVYKVNSLALQRQLGFVTREPRWAVAHKYPAQEMVTRVEGIDVQVGRTGKLTPVARLAPVFVGGVTVTNATLHNLFELRRKKVRVGDQVIVRRAGDVIPEVVGVVPAGAGLAVLAGSDALVDAASSADGTAPAQPLAGPRQPYVPNFRMPRQCPICGSAVVREPGEVNHRCSGGLFCPAQRKQAVLHFAQRRAMDIEGLGEKLVDQLVEGHVIRTLPDLYRLGLSSLAQLDRMAEKSAQNVLDALDKSKRTTLARFLFGLGIRHVGEATAKDLARHFGRLDAIMDAGVEQLLQVNDVGPVVAEAIHTFFAQPHNREVVEQLRACGVTWDESEPAAAATLPLAGMTVVLTGTLPTLGRDAAKDLLESAGAKVAGSVSKKTHYVVAGADAGSKLAKAQELGIPVLDEDGLRALLRGAPPNAGGG.

Positions 1-20 (MGPGLTLSGMTEQSSLFPAP) are disordered. Residues 56–60 (DAEYD), 105–106 (SI), and Glu142 each bind NAD(+). Lys144 serves as the catalytic N6-AMP-lysine intermediate. Residues Arg165, Glu201, Lys322, and Lys346 each coordinate NAD(+). 4 residues coordinate Zn(2+): Cys471, Cys474, Cys489, and Cys495. The BRCT domain occupies 654-740 (AATLPLAGMT…RGAPPNAGGG (87 aa)).

The protein belongs to the NAD-dependent DNA ligase family. LigA subfamily. The cofactor is Mg(2+). It depends on Mn(2+) as a cofactor.

It carries out the reaction NAD(+) + (deoxyribonucleotide)n-3'-hydroxyl + 5'-phospho-(deoxyribonucleotide)m = (deoxyribonucleotide)n+m + AMP + beta-nicotinamide D-nucleotide.. DNA ligase that catalyzes the formation of phosphodiester linkages between 5'-phosphoryl and 3'-hydroxyl groups in double-stranded DNA using NAD as a coenzyme and as the energy source for the reaction. It is essential for DNA replication and repair of damaged DNA. The chain is DNA ligase from Acidovorax ebreus (strain TPSY) (Diaphorobacter sp. (strain TPSY)).